A 269-amino-acid chain; its full sequence is 4-hydroxy-tetrahydrodipicolinate reductase (269 aa).

NAD(+)-binding positions include 8–13 (GAGGRM) and Glu-34. Position 35 (Arg-35) interacts with NADP(+). NAD(+) contacts are provided by residues 98-100 (GTT) and 122-125 (ASNY). The active-site Proton donor/acceptor is the His-155. His-156 provides a ligand contact to (S)-2,3,4,5-tetrahydrodipicolinate. Residue Lys-159 is the Proton donor of the active site. 165-166 (GT) is a binding site for (S)-2,3,4,5-tetrahydrodipicolinate.

This sequence belongs to the DapB family.

It localises to the cytoplasm. The enzyme catalyses (S)-2,3,4,5-tetrahydrodipicolinate + NAD(+) + H2O = (2S,4S)-4-hydroxy-2,3,4,5-tetrahydrodipicolinate + NADH + H(+). It carries out the reaction (S)-2,3,4,5-tetrahydrodipicolinate + NADP(+) + H2O = (2S,4S)-4-hydroxy-2,3,4,5-tetrahydrodipicolinate + NADPH + H(+). It functions in the pathway amino-acid biosynthesis; L-lysine biosynthesis via DAP pathway; (S)-tetrahydrodipicolinate from L-aspartate: step 4/4. Functionally, catalyzes the conversion of 4-hydroxy-tetrahydrodipicolinate (HTPA) to tetrahydrodipicolinate. This chain is 4-hydroxy-tetrahydrodipicolinate reductase, found in Haemophilus ducreyi (strain 35000HP / ATCC 700724).